A 339-amino-acid chain; its full sequence is Methionine import ATP-binding protein MetN 2 (339 aa).

One can recognise an ABC transporter domain in the interval 2 to 241 (ISFNNVSKLY…PKTKTTQNFV (240 aa)). Residue 38–45 (GFSGAGKS) coordinates ATP.

It belongs to the ABC transporter superfamily. Methionine importer (TC 3.A.1.24) family. In terms of assembly, the complex is composed of two ATP-binding proteins (MetN), two transmembrane proteins (MetI) and a solute-binding protein (MetQ).

It is found in the cell membrane. It carries out the reaction L-methionine(out) + ATP + H2O = L-methionine(in) + ADP + phosphate + H(+). The enzyme catalyses D-methionine(out) + ATP + H2O = D-methionine(in) + ADP + phosphate + H(+). Its function is as follows. Part of the ABC transporter complex MetNIQ involved in methionine import. Responsible for energy coupling to the transport system. The polypeptide is Methionine import ATP-binding protein MetN 2 (Bacillus cereus (strain ATCC 14579 / DSM 31 / CCUG 7414 / JCM 2152 / NBRC 15305 / NCIMB 9373 / NCTC 2599 / NRRL B-3711)).